Consider the following 436-residue polypeptide: Protein disulfide-isomerase (436 aa).

One can recognise a Thioredoxin domain in the interval 216 to 365; sequence FLAGKIDPSI…VEDATESAKA (150 aa). Catalysis depends on nucleophile residues Cys266 and Cys269. Cys266 and Cys269 form a disulfide bridge. The segment at 328–436 is disordered; sequence TLVPHCRGSR…ASASSVKDEL (109 aa). Residues 334–343 show a composition bias toward basic residues; the sequence is RGSRPVHRRE. Composition is skewed to low complexity over residues 362 to 377 and 385 to 436; these read SAKA…AASA and VKSG…KDEL. The Prevents secretion from ER signature appears at 433-436; it reads KDEL.

It belongs to the protein disulfide isomerase family.

It is found in the endoplasmic reticulum lumen. It catalyses the reaction Catalyzes the rearrangement of -S-S- bonds in proteins.. Participates in the folding of proteins containing disulfide bonds, may be involved in glycosylation, prolyl hydroxylation and triglyceride transfer. The chain is Protein disulfide-isomerase from Alternaria alternata (Alternaria rot fungus).